Consider the following 150-residue polypeptide: Ribosome maturation factor RimP (150 aa).

It belongs to the RimP family.

The protein localises to the cytoplasm. Functionally, required for maturation of 30S ribosomal subunits. The protein is Ribosome maturation factor RimP of Klebsiella pneumoniae (strain 342).